The following is a 551-amino-acid chain: Probable alpha-glucosidase (551 aa).

Asp-212 functions as the Nucleophile in the catalytic mechanism. Glu-272 (proton donor) is an active-site residue.

The protein belongs to the glycosyl hydrolase 13 family.

It catalyses the reaction Hydrolysis of terminal, non-reducing (1-&gt;4)-linked alpha-D-glucose residues with release of alpha-D-glucose.. The protein is Probable alpha-glucosidase (aglA) of Rhizobium meliloti (strain 1021) (Ensifer meliloti).